The following is a 726-amino-acid chain: Prolyl endopeptidase-like (726 aa).

Position 138 is a phosphoserine (S138). Residues S558, D644, and H689 each act as charge relay system in the active site.

Belongs to the peptidase S9A family. As to quaternary structure, homodimer. Interacts with the AP-1 complex.

The protein resides in the cytoplasm. The protein localises to the cytosol. It localises to the golgi apparatus. It is found in the trans-Golgi network. Its subcellular location is the cytoskeleton. The protein resides in the nucleus. Serine peptidase whose precise substrate specificity remains unclear. Does not cleave peptides after a arginine or lysine residue. Regulates trans-Golgi network morphology and sorting by regulating the membrane binding of the AP-1 complex. May play a role in the regulation of synaptic vesicle exocytosis. The sequence is that of Prolyl endopeptidase-like (Prepl) from Rattus norvegicus (Rat).